A 153-amino-acid polypeptide reads, in one-letter code: Jacalin-related lectin Calsepa (153 aa).

N-acetylalanine is present on alanine 2. Positions 6-152 (DTISGPWGNN…VDAIGTYNRH (147 aa)) constitute a Jacalin-type lectin domain. 3 N-glycan binding regions span residues 17–18 (GN), 95–96 (DN), and 140–144 (GYYVD).

This sequence belongs to the jacalin lectin family. In terms of assembly, homodimer. Not glycosylated. Rhizome (at protein level). Detected in the cortex and the pith of rhizome. Not detected in vascular tissues, pericycle, endodermis or rhizodermis.

The protein localises to the cytoplasm. Hemagglutinating activity is most inhibited by methyl alpha-mannopyranoside. This activity is inhibited to a less extent (about a third of the inhibition of that of methyl alpha-mannopyranoside) by methyl alpha-glucoside, other alpha-glucosides, such as maltose, isomaltose, panose or palatinose, and alpha-glucosides modified at the second position, such as methyl 2-deoxy-alpha-arabinoglucopyranoside or methyl 2-acetamido-2-deoxy alpha-glucopyranoside. Mildly inhibited by free monosaccharides, with glucose presenting at least 20-fold less inhibitory effect on hemagglutinating activity than mannose. Glycoproteins are somewhat inhibitory, the best being asialothyroglobulin and ovomucoid. Not inhibited by isomaltitol, sucrose or trehalose. Functionally, mannose-binding lectin. Preferentially binds mannose at concentrations ranging between 5 and 25 mM, but also binds glucose. Has a marked preference for methylated sugar derivatives, such as alpha-MeMan and alpha-MeGlc, at concentration down to 5 mM. Binds to N-glycans, but not to glycolipid-type or other type of glycans. Binds N-linked high-mannose-type glycans. Has a preference for smaller (Man(2)-Man(6)) high-mannose-type glycans to larger (Man(7)-Man(9)) ones. Recognizes both alpha1-6 extended and alpha1-3 extended monoantennary glycans. The addition of alpha1-2Man to the Man-alpha1-3Man-beta branch results in a significant loss of affinity, but beta1-2GlcNAc has some affinity. Has less affinity for biantennary glycans. However, affinity is significant for the biantennary complex-type N-glycans with bisecting GlcNAc. No affinity is observed for tri- and tetra-antennary glycans. Binds bisected glycans of the mouse brain. Selectively binds to bisecting N-glycans which are in back-fold conformation, and does not favor a glycan with an extend conformation. Has hemagglutinating activity against rabbit erythrocytes at 0.3 ug/ml and against trypsin-treated human erythrocytes at 5 ug/ml. Has mitogenic activity in murine cells. This chain is Jacalin-related lectin Calsepa, found in Calystegia sepium (Hedge bindweed).